Consider the following 290-residue polypeptide: ATP synthase gamma chain (290 aa).

The protein belongs to the ATPase gamma chain family. F-type ATPases have 2 components, CF(1) - the catalytic core - and CF(0) - the membrane proton channel. CF(1) has five subunits: alpha(3), beta(3), gamma(1), delta(1), epsilon(1). CF(0) has three main subunits: a, b and c.

It localises to the cell membrane. Functionally, produces ATP from ADP in the presence of a proton gradient across the membrane. The gamma chain is believed to be important in regulating ATPase activity and the flow of protons through the CF(0) complex. This Heliobacterium modesticaldum (strain ATCC 51547 / Ice1) protein is ATP synthase gamma chain.